A 74-amino-acid polypeptide reads, in one-letter code: Sodium channel neurotoxin MeuNaTxalpha-11 (74 aa).

The signal sequence occupies residues 1 to 7 (LMTGVES). The LCN-type CS-alpha/beta domain maps to 9–73 (RDAYIAKPHN…VPIRIPGKCH (65 aa)). Cystine bridges form between Cys19–Cys72, Cys23–Cys45, Cys31–Cys55, and Cys35–Cys57. Arg74 is a propeptide (removed by a carboxypeptidase).

It belongs to the long (4 C-C) scorpion toxin superfamily. Sodium channel inhibitor family. Alpha subfamily. Expressed by the venom gland.

The protein localises to the secreted. Functionally, alpha toxins bind voltage-independently at site-3 of sodium channels (Nav) and inhibit the inactivation of the activated channels, thereby blocking neuronal transmission. The polypeptide is Sodium channel neurotoxin MeuNaTxalpha-11 (Mesobuthus eupeus (Lesser Asian scorpion)).